Reading from the N-terminus, the 659-residue chain is UDP-glucuronate:xylan alpha-glucuronosyltransferase 1 (659 aa).

Residues 1-14 are compositionally biased toward low complexity; it reads MANSPAAPAPTTTT. Residues 1–20 are disordered; that stretch reads MANSPAAPAPTTTTGGDSRR. The helical; Signal-anchor for type II membrane protein transmembrane segment at 70–90 threads the bilayer; it reads FQIVKLLLFILLSATLFTIIY. Positions 416 and 418 each coordinate Mn(2+). Substrate contacts are provided by residues 416–418, 445–447, 472–476, and 526–531; these read DAD, NSG, NGGDQ, and HYLGMK. Mn(2+) is bound at residue histidine 526.

This sequence belongs to the glycosyltransferase 8 family. Glycogenin subfamily. Mn(2+) is required as a cofactor.

The protein localises to the golgi apparatus membrane. In terms of biological role, glycosyltransferase required for the addition of both glucuronic acid and 4-O-methylglucuronic acid branches to xylan in stem cell walls. In association with GUX2, is responsible for almost all of the substitutions of the xylan backbone in stem glucuronoxylan. The chain is UDP-glucuronate:xylan alpha-glucuronosyltransferase 1 (GUX1) from Arabidopsis thaliana (Mouse-ear cress).